We begin with the raw amino-acid sequence, 127 residues long: Histidine-containing phosphotransfer protein 4 (127 aa).

The 96-residue stretch at 27–122 (NPNFVEEVSA…STLRKKLEHY (96 aa)) folds into the HPt domain. The residue at position 68 (His68) is a Phosphohistidine.

In terms of assembly, interacts with the B-type response regulators ARR1 and ARR2. Two-component system major event consists of a His-to-Asp phosphorelay between a sensor histidine kinase (HK) and a response regulator (RR). In plants, the His-to-Asp phosphorelay involves an additional intermediate named Histidine-containing phosphotransfer protein (HPt). This multistep phosphorelay consists of a His-Asp-His-Asp sequential transfer of a phosphate group between first a His and an Asp of the HK protein, followed by the transfer to a conserved His of the HPt protein and finally the transfer to an Asp in the receiver domain of the RR protein. As to expression, predominantly expressed in aerial parts of the plant.

It is found in the cytoplasm. Its subcellular location is the cytosol. The protein resides in the nucleus. Functionally, functions as a two-component phosphorelay mediator between cytokinin sensor histidine kinases and response regulators (B-type ARRs). Plays an important role in propagating cytokinin signal transduction through the multistep His-to-Asp phosphorelay. This is Histidine-containing phosphotransfer protein 4 (AHP4) from Arabidopsis thaliana (Mouse-ear cress).